Reading from the N-terminus, the 282-residue chain is NADPH-dependent 7-cyano-7-deazaguanine reductase (282 aa).

88–90 (IES) contacts substrate. 90 to 91 (SK) is an NADPH binding site. Cys190 functions as the Thioimide intermediate in the catalytic mechanism. The active-site Proton donor is Asp197. 229–230 (HE) is a binding site for substrate. 258–259 (RG) lines the NADPH pocket.

The protein belongs to the GTP cyclohydrolase I family. QueF type 2 subfamily. In terms of assembly, homodimer.

It localises to the cytoplasm. The catalysed reaction is 7-aminomethyl-7-carbaguanine + 2 NADP(+) = 7-cyano-7-deazaguanine + 2 NADPH + 3 H(+). It participates in tRNA modification; tRNA-queuosine biosynthesis. Its function is as follows. Catalyzes the NADPH-dependent reduction of 7-cyano-7-deazaguanine (preQ0) to 7-aminomethyl-7-deazaguanine (preQ1). This chain is NADPH-dependent 7-cyano-7-deazaguanine reductase, found in Salmonella paratyphi C (strain RKS4594).